We begin with the raw amino-acid sequence, 383 residues long: Decapping nuclease RAI1 (383 aa).

Glu-166 provides a ligand contact to a divalent metal cation. A substrate-binding site is contributed by Glu-215. Residues Asp-217, Glu-235, and Leu-236 each coordinate a divalent metal cation. 2 residues coordinate substrate: Lys-237 and Gln-261.

Belongs to the DXO/Dom3Z family. In terms of assembly, interacts with RAT1; the interaction is direct, stabilizes RAT1 protein structure and stimulates its exoribonuclease activity. The interaction also stimulates RAI1 pyrophosphohydrolase activity, probably by recruiting it to mRNA substrates. The cofactor is a divalent metal cation.

Its subcellular location is the nucleus. The enzyme catalyses a 5'-end NAD(+)-phospho-ribonucleoside in mRNA + H2O = a 5'-end phospho-ribonucleoside in mRNA + NAD(+) + H(+). It catalyses the reaction a 5'-end (N(7)-methyl 5'-triphosphoguanosine)-ribonucleoside-ribonucleotide in mRNA + H2O = a (N(7)-methyl 5'-triphosphoguanosine)-nucleoside + a 5'-end phospho-ribonucleoside in mRNA + H(+). It carries out the reaction a 5'-end triphospho-ribonucleoside in mRNA + H2O = a 5'-end phospho-ribonucleoside in mRNA + diphosphate + H(+). Decapping enzyme for NAD-capped RNAs: specifically hydrolyzes the nicotinamide adenine dinucleotide (NAD) cap from a subset of RNAs by removing the entire NAD moiety from the 5'-end of an NAD-capped RNA. The NAD-cap is present at the 5'-end of some RNAs and snoRNAs. In contrast to the canonical 5'-end N7 methylguanosine (m7G) cap, the NAD cap promotes mRNA decay. Also acts as a non-canonical decapping enzyme that removes the entire cap structure of m7G capped or incompletely capped RNAs. Has decapping activity toward incomplete 5'-end m7G cap mRNAs such as unmethylated 5'-end-capped RNA (cap0), while it has no activity toward 2'-O-ribose methylated m7G cap (cap1). Also possesses RNA 5'-pyrophosphohydrolase activity by hydrolyzing the 5'-end triphosphate to release pyrophosphates. Stimulates exoribonuclease activity of Rat1, allowing it to degrade RNAs with stable secondary structure more effectively. This chain is Decapping nuclease RAI1, found in Lachancea thermotolerans (strain ATCC 56472 / CBS 6340 / NRRL Y-8284) (Yeast).